The sequence spans 155 residues: Antitoxin HicB 1 (155 aa).

The HTH cro/C1-type domain maps to 99–153 (MLNAFLDSKLTQIELANRMGVKKQEVTRIFDLRHSTKIDTVGKVASAIGHQLTLS). Residues 110–129 (QIELANRMGVKKQEVTRIFD) constitute a DNA-binding region (H-T-H motif).

It belongs to the HicB antitoxin family. In terms of assembly, probably forms a complex with the probable mRNA interferase HicA1 (its cognate toxin); when complexed with HicA 1 inhibits the toxin activity.

Antitoxin component of a type II toxin-antitoxin (TA) system. Functions as an mRNA interferase antitoxin preventing effects of the HicA 1 toxin. This Photorhabdus laumondii subsp. laumondii (strain DSM 15139 / CIP 105565 / TT01) (Photorhabdus luminescens subsp. laumondii) protein is Antitoxin HicB 1 (hicB1).